The sequence spans 309 residues: MEKVLVFGHKNPDTDAICSAIAYAELKKELGMNAEPVRLGEISGETQFALDYFKVEGPRFVETVANEVDNVILVDHNERQQSANDIESVRVLEVIDHHRIANFETSDPIYYRCEPVGCTATILNKMYKENGITIRKEVAGLMLSAIISDSLLFKSPTCTEQDVAAARELAEIAGVDADKYGLEMLKAGADLSGKTMEQLISLDAKEFQMGNAKVEIAQVNAVDTNDVLVHQAELEKVISAVVEEKGLDLFLFVVTDILTNDSVGLAIGKAANIVEKAYNVSLENNTATLKGVVSRKKQIVPVLTEAFQA.

Mn(2+) contacts are provided by His9, Asp13, Asp15, Asp75, His97, and Asp149.

The protein belongs to the PPase class C family. The cofactor is Mn(2+).

It localises to the cytoplasm. The catalysed reaction is diphosphate + H2O = 2 phosphate + H(+). In Bacillus cereus (strain AH187), this protein is Probable manganese-dependent inorganic pyrophosphatase.